A 603-amino-acid chain; its full sequence is UvrABC system protein C (603 aa).

The GIY-YIG domain occupies Asp-15–Ile-92. A UVR domain is found at Lys-197–Thr-232.

It belongs to the UvrC family. In terms of assembly, interacts with UvrB in an incision complex.

It is found in the cytoplasm. Its function is as follows. The UvrABC repair system catalyzes the recognition and processing of DNA lesions. UvrC both incises the 5' and 3' sides of the lesion. The N-terminal half is responsible for the 3' incision and the C-terminal half is responsible for the 5' incision. The polypeptide is UvrABC system protein C (Listeria welshimeri serovar 6b (strain ATCC 35897 / DSM 20650 / CCUG 15529 / CIP 8149 / NCTC 11857 / SLCC 5334 / V8)).